The sequence spans 211 residues: Holliday junction branch migration complex subunit RuvA (211 aa).

The domain I stretch occupies residues 1–70 (MIQFLQGQVV…QDQIALFGFG (70 aa)). The domain II stretch occupies residues 71–149 (RLAERDLFGQ…QWHKLQMGTG (79 aa)). The tract at residues 150 to 158 (ETDSTLPTT) is flexible linker. Positions 158–211 (TALLEDLEMTLLALGYTQTEIQQAIAMVSQVPDVAQSEDPEVWIRQAIGWLSDH) are domain III.

This sequence belongs to the RuvA family. In terms of assembly, homotetramer. Forms an RuvA(8)-RuvB(12)-Holliday junction (HJ) complex. HJ DNA is sandwiched between 2 RuvA tetramers; dsDNA enters through RuvA and exits via RuvB. An RuvB hexamer assembles on each DNA strand where it exits the tetramer. Each RuvB hexamer is contacted by two RuvA subunits (via domain III) on 2 adjacent RuvB subunits; this complex drives branch migration. In the full resolvosome a probable DNA-RuvA(4)-RuvB(12)-RuvC(2) complex forms which resolves the HJ.

It localises to the cytoplasm. Functionally, the RuvA-RuvB-RuvC complex processes Holliday junction (HJ) DNA during genetic recombination and DNA repair, while the RuvA-RuvB complex plays an important role in the rescue of blocked DNA replication forks via replication fork reversal (RFR). RuvA specifically binds to HJ cruciform DNA, conferring on it an open structure. The RuvB hexamer acts as an ATP-dependent pump, pulling dsDNA into and through the RuvAB complex. HJ branch migration allows RuvC to scan DNA until it finds its consensus sequence, where it cleaves and resolves the cruciform DNA. This is Holliday junction branch migration complex subunit RuvA from Synechocystis sp. (strain ATCC 27184 / PCC 6803 / Kazusa).